Here is a 253-residue protein sequence, read N- to C-terminus: 5-oxoprolinase subunit A (253 aa).

Belongs to the LamB/PxpA family. In terms of assembly, forms a complex composed of PxpA, PxpB and PxpC.

The enzyme catalyses 5-oxo-L-proline + ATP + 2 H2O = L-glutamate + ADP + phosphate + H(+). Functionally, catalyzes the cleavage of 5-oxoproline to form L-glutamate coupled to the hydrolysis of ATP to ADP and inorganic phosphate. This is 5-oxoprolinase subunit A from Bacillus anthracis (strain A0248).